Here is a 480-residue protein sequence, read N- to C-terminus: Protein nucleotidyltransferase YdiU (480 aa).

Positions 86, 88, 89, 109, 121, 122, 172, and 179 each coordinate ATP. The active-site Proton acceptor is Asp-248. 2 residues coordinate Mg(2+): Asn-249 and Asp-258. Asp-258 is a binding site for ATP.

This sequence belongs to the SELO family. Mg(2+) serves as cofactor. It depends on Mn(2+) as a cofactor.

It carries out the reaction L-seryl-[protein] + ATP = 3-O-(5'-adenylyl)-L-seryl-[protein] + diphosphate. The enzyme catalyses L-threonyl-[protein] + ATP = 3-O-(5'-adenylyl)-L-threonyl-[protein] + diphosphate. It catalyses the reaction L-tyrosyl-[protein] + ATP = O-(5'-adenylyl)-L-tyrosyl-[protein] + diphosphate. The catalysed reaction is L-histidyl-[protein] + UTP = N(tele)-(5'-uridylyl)-L-histidyl-[protein] + diphosphate. It carries out the reaction L-seryl-[protein] + UTP = O-(5'-uridylyl)-L-seryl-[protein] + diphosphate. The enzyme catalyses L-tyrosyl-[protein] + UTP = O-(5'-uridylyl)-L-tyrosyl-[protein] + diphosphate. Nucleotidyltransferase involved in the post-translational modification of proteins. It can catalyze the addition of adenosine monophosphate (AMP) or uridine monophosphate (UMP) to a protein, resulting in modifications known as AMPylation and UMPylation. The chain is Protein nucleotidyltransferase YdiU from Salmonella agona (strain SL483).